We begin with the raw amino-acid sequence, 376 residues long: Heptahelical transmembrane protein ADIPOR1 (376 aa).

The Cytoplasmic portion of the chain corresponds to 1–90 (MGEEAAMATM…LSLFSWHNET (90 aa)). The segment at 20-46 (PAAAPAPAKGGGSKKKRKQQKREEKRK) is disordered. The helical transmembrane segment at 91-111 (INIWTHLLGFVLFFGLTVLHL) threads the bilayer. Topologically, residues 112–179 (GQYFPQVADL…AAAAATTRWP (68 aa)) are extracellular. Residues 180–200 (FFVFLAGAMFCLLSSAACHLL) form a helical membrane-spanning segment. The Cytoplasmic segment spans residues 201 to 216 (SCHSHRLNLFLIRLDY). Residues 217-237 (TGIAVMIVVSFFPPIYYIFQC) form a helical membrane-spanning segment. Over 238–240 (EPR) the chain is Extracellular. Residues 241–261 (WQVVYLSAITAAGVATVYALM) form a helical membrane-spanning segment. Residues 262-274 (SPRLSAARYRAHR) lie on the Cytoplasmic side of the membrane. Residues 275–295 (ALLFVAMGLSGVVPAAHAVAV) form a helical membrane-spanning segment. The Extracellular segment spans residues 296–303 (NWHEPRRN). Residues 304–324 (VTLAYEGAMAASYLAGTAFYL) traverse the membrane as a helical segment. The Cytoplasmic portion of the chain corresponds to 325 to 344 (TRVPERWRPGMFDLCGHSHQ). Residues 345–365 (IFHALVIAGALAHYAAAIVFI) form a helical membrane-spanning segment. Over 366–376 (QARDEMGCPAP) the chain is Extracellular.

This sequence belongs to the ADIPOR family.

Its subcellular location is the membrane. Its function is as follows. May play a role in abiotic stress response. In Oryza sativa subsp. japonica (Rice), this protein is Heptahelical transmembrane protein ADIPOR1 (ADIPOR1).